The primary structure comprises 265 residues: Mlc titration factor A (265 aa).

4 residues coordinate Zn(2+): His111, His148, His152, and Glu211.

This sequence belongs to the MtfA family. In terms of assembly, interacts with Mlc. The cofactor is Zn(2+).

The protein localises to the cytoplasm. In terms of biological role, involved in the modulation of the activity of the glucose-phosphotransferase system (glucose-PTS). Interacts with the transcriptional repressor Mlc, preventing its interaction with DNA and leading to the modulation of expression of genes regulated by Mlc, including ptsG, which encodes the PTS system glucose-specific EIICB component. Shows zinc-dependent metallopeptidase activity. The polypeptide is Mlc titration factor A (Escherichia coli O6:K15:H31 (strain 536 / UPEC)).